The sequence spans 264 residues: 3-methyl-2-oxobutanoate hydroxymethyltransferase (264 aa).

Mg(2+) is bound by residues D45 and D84. 3-methyl-2-oxobutanoate-binding positions include 45-46 (DS), D84, and K112. E114 lines the Mg(2+) pocket. E181 serves as the catalytic Proton acceptor.

This sequence belongs to the PanB family. As to quaternary structure, homodecamer; pentamer of dimers. It depends on Mg(2+) as a cofactor.

It localises to the cytoplasm. The enzyme catalyses 3-methyl-2-oxobutanoate + (6R)-5,10-methylene-5,6,7,8-tetrahydrofolate + H2O = 2-dehydropantoate + (6S)-5,6,7,8-tetrahydrofolate. It functions in the pathway cofactor biosynthesis; (R)-pantothenate biosynthesis; (R)-pantoate from 3-methyl-2-oxobutanoate: step 1/2. Its function is as follows. Catalyzes the reversible reaction in which hydroxymethyl group from 5,10-methylenetetrahydrofolate is transferred onto alpha-ketoisovalerate to form ketopantoate. This chain is 3-methyl-2-oxobutanoate hydroxymethyltransferase, found in Colwellia psychrerythraea (strain 34H / ATCC BAA-681) (Vibrio psychroerythus).